A 139-amino-acid polypeptide reads, in one-letter code: Lymphocyte antigen 6H (139 aa).

The signal sequence occupies residues 1-25 (MLPAAMKSLGLALLALLLCPSPAHG). One can recognise a UPAR/Ly6 domain in the interval 26–113 (LWCQDCTLAN…CEKDLCNGAS (88 aa)). Cystine bridges form between cysteine 28–cysteine 51, cysteine 31–cysteine 39, cysteine 44–cysteine 72, cysteine 76–cysteine 103, and cysteine 104–cysteine 109. The N-linked (GlcNAc...) asparagine glycan is linked to asparagine 35. The GPI-anchor amidated asparagine moiety is linked to residue asparagine 110. A propeptide spans 111-139 (GASVAGRSPWALAGGLLLSLGPALLWAGP) (removed in mature form).

In terms of assembly, interacts with CHRNA4 and CHRNA7. In terms of tissue distribution, strongly expressed in brain, also found in lower levels in eye and reproductive tissues.

Its subcellular location is the cell membrane. Functionally, believed to act as modulator of nicotinic acetylcholine receptors (nAChRs) activity. In vitro inhibits alpha-3:beta-4-containing nAChRs maximum response. In vitro inhibits alpha-3:beta-4-containing nAChRs maximum response. May play a role in the intracellular trafficking of alpha-7-containing nAChRs and may inhibit their expression at the cell surface. Seems to inhibit alpha-7/CHRNA7 signaling in hippocampal neurons. The chain is Lymphocyte antigen 6H (Ly6h) from Mus musculus (Mouse).